The primary structure comprises 707 residues: Ribosomal RNA large subunit methyltransferase K/L (707 aa).

The region spanning Gln-43 to Met-154 is the THUMP domain.

The protein belongs to the methyltransferase superfamily. RlmKL family.

Its subcellular location is the cytoplasm. The catalysed reaction is guanosine(2445) in 23S rRNA + S-adenosyl-L-methionine = N(2)-methylguanosine(2445) in 23S rRNA + S-adenosyl-L-homocysteine + H(+). It catalyses the reaction guanosine(2069) in 23S rRNA + S-adenosyl-L-methionine = N(2)-methylguanosine(2069) in 23S rRNA + S-adenosyl-L-homocysteine + H(+). In terms of biological role, specifically methylates the guanine in position 2445 (m2G2445) and the guanine in position 2069 (m7G2069) of 23S rRNA. This Vibrio parahaemolyticus serotype O3:K6 (strain RIMD 2210633) protein is Ribosomal RNA large subunit methyltransferase K/L.